We begin with the raw amino-acid sequence, 167 residues long: Nucleoside diphosphate kinase (167 aa).

Lys-11, Arg-92, Thr-98, Arg-109, and Asn-129 together coordinate ATP. His-132 serves as the catalytic Pros-phosphohistidine intermediate.

Belongs to the NDK family. In terms of assembly, homotetramer. Requires Mg(2+) as cofactor.

Its subcellular location is the cytoplasm. It catalyses the reaction a 2'-deoxyribonucleoside 5'-diphosphate + ATP = a 2'-deoxyribonucleoside 5'-triphosphate + ADP. The enzyme catalyses a ribonucleoside 5'-diphosphate + ATP = a ribonucleoside 5'-triphosphate + ADP. Its function is as follows. Major role in the synthesis of nucleoside triphosphates other than ATP. The ATP gamma phosphate is transferred to the NDP beta phosphate via a ping-pong mechanism, using a phosphorylated active-site intermediate. This Borreliella burgdorferi (strain ATCC 35210 / DSM 4680 / CIP 102532 / B31) (Borrelia burgdorferi) protein is Nucleoside diphosphate kinase (ndk).